The sequence spans 367 residues: MIKKNKKVIIAMSGGVDSSVSAWFLKNENYQVEGLFMKNWEEDDEKEYCNAAKDLSDAEEVCKKLNIHLHKVNFSKEYWEKVFENFLNEHKKGKTPNPDILCNKEIKFKIFFNYAIQELQSDYIATGHYAQIKKKNGKYFLLKAVDLNKDQSYFLYTLKGIQLKNILFPIGGLKKSQVRIIAKKIGLKVAEKKDSTGICFIGPKKINNFLNRYIKAEKGDIITTEGTIVGKHNGLFCYTLGQRKGLGIGGIKGNYNIPWYVIEKNIINNTLIIAQGSCNKRLMSIGLIAEKINWINDDKIIFPFSCQAKIRYRQIDIFCNIKYINDFLIKVLFDSPVSSVTPGQSIVFYSSKICLGGGVIQSRLPLL.

Residues A11–S18 and M37 each bind ATP. The interval N97 to D99 is interaction with target base in tRNA. The active-site Nucleophile is the C102. C102 and C199 are disulfide-bonded. G127 serves as a coordination point for ATP. The tract at residues K149–Q151 is interaction with tRNA. C199 (cysteine persulfide intermediate) is an active-site residue. The segment at R311–Y312 is interaction with tRNA.

It belongs to the MnmA/TRMU family. As to quaternary structure, interacts with TusE.

It is found in the cytoplasm. It catalyses the reaction S-sulfanyl-L-cysteinyl-[protein] + uridine(34) in tRNA + AH2 + ATP = 2-thiouridine(34) in tRNA + L-cysteinyl-[protein] + A + AMP + diphosphate + H(+). In terms of biological role, catalyzes the 2-thiolation of uridine at the wobble position (U34) of tRNA(Lys), tRNA(Glu) and tRNA(Gln), leading to the formation of s(2)U34, the first step of tRNA-mnm(5)s(2)U34 synthesis. Sulfur is provided by IscS, via a sulfur-relay system. Binds ATP and its substrate tRNAs. This is tRNA-specific 2-thiouridylase MnmA from Buchnera aphidicola subsp. Schizaphis graminum (strain Sg).